The primary structure comprises 117 residues: MDWTWRILFLVAAATGAHSQVQLVQSGAEVKKPGASVKVSCKASGYTFTSYAMHWVRQAPGQRLEWMGWINAGNGNTKYSQKFQGRVTITRDTSASTAYMELSSLRSEDTAVYYCAR.

The N-terminal stretch at 1–19 (MDWTWRILFLVAAATGAHS) is a signal peptide. The tract at residues 20–44 (QVQLVQSGAEVKKPGASVKVSCKAS) is framework-1. Residues 20 to 117 (QVQLVQSGAE…EDTAVYYCAR (98 aa)) enclose the Ig-like domain. Cysteine 41 and cysteine 115 are oxidised to a cystine. The interval 45 to 52 (GYTFTSYA) is complementarity-determining-1. The segment at 53 to 69 (MHWVRQAPGQRLEWMGW) is framework-2. Residues 70 to 77 (INAGNGNT) are complementarity-determining-2. A framework-3 region spans residues 78-115 (KYSQKFQGRVTITRDTSASTAYMELSSLRSEDTAVYYC). Positions 116–117 (AR) are complementarity-determining-3.

In terms of assembly, immunoglobulins are composed of two identical heavy chains and two identical light chains; disulfide-linked.

It is found in the secreted. The protein resides in the cell membrane. Functionally, v region of the variable domain of immunoglobulin heavy chains that participates in the antigen recognition. Immunoglobulins, also known as antibodies, are membrane-bound or secreted glycoproteins produced by B lymphocytes. In the recognition phase of humoral immunity, the membrane-bound immunoglobulins serve as receptors which, upon binding of a specific antigen, trigger the clonal expansion and differentiation of B lymphocytes into immunoglobulins-secreting plasma cells. Secreted immunoglobulins mediate the effector phase of humoral immunity, which results in the elimination of bound antigens. The antigen binding site is formed by the variable domain of one heavy chain, together with that of its associated light chain. Thus, each immunoglobulin has two antigen binding sites with remarkable affinity for a particular antigen. The variable domains are assembled by a process called V-(D)-J rearrangement and can then be subjected to somatic hypermutations which, after exposure to antigen and selection, allow affinity maturation for a particular antigen. The protein is Immunoglobulin heavy variable 1-3 of Homo sapiens (Human).